The sequence spans 640 residues: Threonine--tRNA ligase (640 aa).

Positions 1–61 constitute a TGS domain; sequence MPVVTLPDGS…DKDSHLAIIT (61 aa). Positions 242-533 are catalytic; sequence DHRRLGKQLD…LIENHAGNMP (292 aa). C333, H384, and H510 together coordinate Zn(2+).

This sequence belongs to the class-II aminoacyl-tRNA synthetase family. In terms of assembly, homodimer. The cofactor is Zn(2+).

It is found in the cytoplasm. It carries out the reaction tRNA(Thr) + L-threonine + ATP = L-threonyl-tRNA(Thr) + AMP + diphosphate + H(+). Catalyzes the attachment of threonine to tRNA(Thr) in a two-step reaction: L-threonine is first activated by ATP to form Thr-AMP and then transferred to the acceptor end of tRNA(Thr). Also edits incorrectly charged L-seryl-tRNA(Thr). The sequence is that of Threonine--tRNA ligase from Polynucleobacter asymbioticus (strain DSM 18221 / CIP 109841 / QLW-P1DMWA-1) (Polynucleobacter necessarius subsp. asymbioticus).